Consider the following 201-residue polypeptide: UPF0301 protein R00917 (201 aa).

This sequence belongs to the UPF0301 (AlgH) family.

This Rhizobium meliloti (strain 1021) (Ensifer meliloti) protein is UPF0301 protein R00917.